We begin with the raw amino-acid sequence, 376 residues long: Protein-arginine rhamnosyltransferase (376 aa).

DTDP-beta-L-rhamnose is bound by residues 13–16 (NYGD), Tyr-192, 252–254 (MAQ), and 270–274 (RGEDS). 14 to 15 (YG) is a dTDP binding site. The active-site Proton acceptor is the Asp-16. Residues Tyr-192, 252 to 254 (MAQ), and 270 to 274 (RGEDS) contribute to the dTDP site. Glu-272 is an active-site residue.

It belongs to the glycosyltransferase 104 family.

It carries out the reaction dTDP-beta-L-rhamnose + L-arginyl-[protein] = N(omega)-(alpha-L-rhamnosyl)-L-arginyl-[protein] + dTDP + H(+). Its function is as follows. Protein-arginine rhamnosyltransferase that catalyzes the transfer of a single rhamnose to elongation factor P (EF-P) on 'Lys-32', a modification required for EF-P-dependent rescue of polyproline stalled ribosomes. This Pseudomonas aeruginosa (strain ATCC 15692 / DSM 22644 / CIP 104116 / JCM 14847 / LMG 12228 / 1C / PRS 101 / PAO1) protein is Protein-arginine rhamnosyltransferase.